Reading from the N-terminus, the 247-residue chain is MPRFKLTLEYDGSNYAGWQRQAELHTIQSALEQAIFHFSGQQLTTTTAGRTDAGVHATGQVAHVDFIKNWQTYTVRDALNAYLQKQGEEIAVLNVQNVPDNFDARFSAIKRHYLFKILNRLSPPALNIKRVWWIPKPLNVDAMHQAAQKLVGQHDFTTFRSAHCQAKSPIRTLERLDVYREGEEIFLYAQARSFLHHQIRSFAGSLMEVGIGRWTAQDLEAALHAKDRKRCGMVAPPSGLYLTQVDY.

The active-site Nucleophile is Asp-52. Tyr-113 is a substrate binding site.

It belongs to the tRNA pseudouridine synthase TruA family. As to quaternary structure, homodimer.

It catalyses the reaction uridine(38/39/40) in tRNA = pseudouridine(38/39/40) in tRNA. Functionally, formation of pseudouridine at positions 38, 39 and 40 in the anticodon stem and loop of transfer RNAs. In Bartonella quintana (strain Toulouse) (Rochalimaea quintana), this protein is tRNA pseudouridine synthase A.